We begin with the raw amino-acid sequence, 129 residues long: DNA-directed RNA polymerase subunit omega (129 aa).

A disordered region spans residues 77–98 (VDEPESEVVPALSSAPQNPEAI).

Belongs to the RNA polymerase subunit omega family. The RNAP catalytic core consists of 2 alpha, 1 beta, 1 beta' and 1 omega subunit. When a sigma factor is associated with the core the holoenzyme is formed, which can initiate transcription.

The catalysed reaction is RNA(n) + a ribonucleoside 5'-triphosphate = RNA(n+1) + diphosphate. In terms of biological role, promotes RNA polymerase assembly. Latches the N- and C-terminal regions of the beta' subunit thereby facilitating its interaction with the beta and alpha subunits. The chain is DNA-directed RNA polymerase subunit omega from Methylocella silvestris (strain DSM 15510 / CIP 108128 / LMG 27833 / NCIMB 13906 / BL2).